A 512-amino-acid chain; its full sequence is Sucrose transport protein SUC5 (512 aa).

The disordered stretch occupies residues 1–27; the sequence is MGALEAERAANNATALETQSSPEDLGQ. Over 1 to 33 the chain is Cytoplasmic; the sequence is MGALEAERAANNATALETQSSPEDLGQPSPLRK. The span at 11–22 shows a compositional bias: polar residues; sequence NNATALETQSSP. Ser-20 carries the post-translational modification Phosphoserine. A helical membrane pass occupies residues 34 to 54; it reads IISVASIAAGVQFGWALQLSL. Over 55–67 the chain is Extracellular; it reads LTPYIQLLGIPHK. Residues 68–88 form a helical membrane-spanning segment; sequence WSSYMWLCGPISGMIVQPIVG. The Cytoplasmic portion of the chain corresponds to 89–102; it reads YHSDRCESRFGRRR. Residues 103 to 123 form a helical membrane-spanning segment; it reads PFIAAGVALVAVSVFLIGFAA. Topologically, residues 124–140 are extracellular; the sequence is DMGHSFGDKLENKVRTR. A helical transmembrane segment spans residues 141-161; it reads AIIIFLTGFWFLDVANNTLQG. Topologically, residues 162-179 are cytoplasmic; the sequence is PCRAFLADLAAGDAKKTR. The chain crosses the membrane as a helical span at residues 180 to 200; sequence VANACFSFFMAVGNVLGYAAG. Residues 201–225 lie on the Extracellular side of the membrane; sequence SYTNLHKMFPFTMTKACDIYCANLK. A helical transmembrane segment spans residues 226 to 246; the sequence is TCFFLSITLLLIVTFSSLWYV. Residues 247–281 lie on the Cytoplasmic side of the membrane; the sequence is KDKQWSPPQGDKEEKTSSLFFFGEIFGAVRHMKRP. The helical transmembrane segment at 282-302 threads the bilayer; the sequence is MVMLLIVTVINWIAWFPFILY. At 303–333 the chain is on the extracellular side; sequence DTDWMGREVYGGNSDGDERSKKLYDQGVQAG. The chain crosses the membrane as a helical span at residues 334–354; it reads ALGLMFNSILLGFVSLGVESI. Over 355 to 363 the chain is Cytoplasmic; sequence GRKMGGAKR. A helical membrane pass occupies residues 364-384; that stretch reads LWGCVNFILAIGLAMTVLVTK. At 385 to 406 the chain is on the extracellular side; sequence SAEHHREIAGPLAGPSSGIKAG. A helical transmembrane segment spans residues 407–427; it reads VFSLFTVLGIPLAITYSIPFA. At 428 to 440 the chain is on the cytoplasmic side; sequence LASIFSTNSGAGQ. A helical transmembrane segment spans residues 441–461; it reads GLSLGVLNIAICIPQMIVSFS. The Extracellular segment spans residues 462 to 473; it reads SGPLDAQFGGGN. A helical transmembrane segment spans residues 474–494; the sequence is LPSFVVGAIAAAVSGVLALTV. Topologically, residues 495–512 are cytoplasmic; sequence LPSPPPDAPAMSGAMGFH.

It belongs to the glycoside-pentoside-hexuronide (GPH) cation symporter transporter (TC 2.A.2.4) family. Widely expressed. Expressed in the endosperm and on the epidermis of the outer surface of the cotyledons of torpedo-stage or older embryos.

It is found in the cell membrane. The enzyme catalyses sucrose(out) + H(+)(out) = sucrose(in) + H(+)(in). Its pathway is glycan biosynthesis; sucrose metabolism. Its activity is regulated as follows. Inhibited by protonophores (e.g. carbonyl cyanide m-chlorophenyl-hydrazone (CCCP)) and SH group inhibitors (e.g. p-chloromercuribenzene sulphonic acid (PCMBS)). Responsible in a heterologous system for the transport of sucrose into the cell, with the concomitant uptake of protons (symport system). Can also transport biotin, and probably maltose at a lesser rate. In planta, the role of SUC5 for the transport of sucrose seems to be negligible. Plays a role in the nutrition of the filial tissues during early seed development and is probably involved in the import of biotin into the endosperm and the embryo epidermis. This is Sucrose transport protein SUC5 from Arabidopsis thaliana (Mouse-ear cress).